Consider the following 599-residue polypeptide: Elongation factor 4 (599 aa).

The tr-type G domain occupies 2 to 184; the sequence is KHIRNFSIIA…RLVRDIPPPQ (183 aa). Residues 14 to 19 and 131 to 134 contribute to the GTP site; these read DHGKST and NKID.

The protein belongs to the TRAFAC class translation factor GTPase superfamily. Classic translation factor GTPase family. LepA subfamily.

Its subcellular location is the cell inner membrane. The enzyme catalyses GTP + H2O = GDP + phosphate + H(+). Its function is as follows. Required for accurate and efficient protein synthesis under certain stress conditions. May act as a fidelity factor of the translation reaction, by catalyzing a one-codon backward translocation of tRNAs on improperly translocated ribosomes. Back-translocation proceeds from a post-translocation (POST) complex to a pre-translocation (PRE) complex, thus giving elongation factor G a second chance to translocate the tRNAs correctly. Binds to ribosomes in a GTP-dependent manner. The chain is Elongation factor 4 from Yersinia enterocolitica serotype O:8 / biotype 1B (strain NCTC 13174 / 8081).